We begin with the raw amino-acid sequence, 532 residues long: 56 kDa type-specific antigen (532 aa).

Residues 1 to 22 form the signal peptide; it reads MKKIMLIASAMSALSLPFSASA. Residues 67–87 form a helical membrane-spanning segment; the sequence is TNGLPFGGTLAAGMTIAPGFR. A disordered region spans residues 401–428; the sequence is QEEDAKNQGEGDCKQQQGTSEKSKKGKD. The segment covering 403–413 has biased composition (basic and acidic residues); the sequence is EDAKNQGEGDC. Residues 480–500 traverse the membrane as a helical segment; it reads TGMVASGALGVAINAAEGVYV.

It localises to the cell membrane. In terms of biological role, may be an adherent factor for rickettsial adsorption to the host-cell surface and a determinant of virulence of individual rickettsial strain. It is the major outer membrane protein. This Orientia tsutsugamushi (Rickettsia tsutsugamushi) protein is 56 kDa type-specific antigen.